A 272-amino-acid chain; its full sequence is Glutamate racemase (272 aa).

Substrate contacts are provided by residues 13 to 14 (DS) and 45 to 46 (YG). The Proton donor/acceptor role is filled by Cys76. Position 77–78 (77–78 (NT)) interacts with substrate. Residue Cys187 is the Proton donor/acceptor of the active site. 188–189 (TH) serves as a coordination point for substrate.

The protein belongs to the aspartate/glutamate racemases family.

The enzyme catalyses L-glutamate = D-glutamate. The protein operates within cell wall biogenesis; peptidoglycan biosynthesis. Its function is as follows. Provides the (R)-glutamate required for cell wall biosynthesis. This is Glutamate racemase from Roseiflexus sp. (strain RS-1).